Reading from the N-terminus, the 235-residue chain is Zein-alpha ZG99 (235 aa).

The N-terminal stretch at 1 to 21 (MAAKIFCLIMLLGLSASAATA) is a signal peptide.

Belongs to the zein family.

In terms of biological role, zeins are major seed storage proteins. This chain is Zein-alpha ZG99, found in Zea mays (Maize).